The chain runs to 592 residues: uncharacterized protein (592 aa).

6 helical membrane passes run 12–32 (IWILQTLAITSVVFSFGIFLL), 58–78 (PILFFLLIVAMTLLSVRISLV), 102–122 (MGLFCVIAASSVSAALVSYYL), 191–211 (ISYTILLWGLAGPMIVLGVEI), 214–234 (MMVFLVFGYVIFTTLIAFWLG), and 299–319 (FSGFNLVVSQISVVFPLLIQV). The ABC transmembrane type-1 domain occupies 58 to 358 (PILFFLLIVA…FRSTYDNFAS (301 aa)). Residues 391 to 592 (VIFKNLSIQN…LQDKGQWQVL (202 aa)) enclose the ABC transporter domain. Residue 424–431 (GKSGAGKT) coordinates ATP.

It belongs to the ABC transporter superfamily.

It is found in the cell inner membrane. This is an uncharacterized protein from Haemophilus influenzae (strain ATCC 51907 / DSM 11121 / KW20 / Rd).